The primary structure comprises 897 residues: 3'-5' exonuclease DinG (897 aa).

Residues 8 to 161 (VVDLETTGNQ…DEDAATTAKL (154 aa)) form the Exonuclease domain. A Helicase ATP-binding domain is found at 241–496 (SKAVDQLGLT…KAIDQLEKQR (256 aa)). Position 276–283 (276–283 (ASLGSGKS)) interacts with ATP. The DEAH box signature appears at 448-451 (DEAH). Positions 703–893 (NIDEYVASIV…QFGKLLRQIQ (191 aa)) constitute a Helicase C-terminal domain.

The protein belongs to the helicase family. DinG subfamily. Type 2 sub-subfamily.

Its function is as follows. 3'-5' exonuclease. The chain is 3'-5' exonuclease DinG from Staphylococcus aureus (strain USA300).